Consider the following 122-residue polypeptide: Large ribosomal subunit protein uL18 (122 aa).

It belongs to the universal ribosomal protein uL18 family. In terms of assembly, part of the 50S ribosomal subunit; part of the 5S rRNA/L5/L18/L25 subcomplex. Contacts the 5S and 23S rRNAs.

This is one of the proteins that bind and probably mediate the attachment of the 5S RNA into the large ribosomal subunit, where it forms part of the central protuberance. This is Large ribosomal subunit protein uL18 from Desulforapulum autotrophicum (strain ATCC 43914 / DSM 3382 / VKM B-1955 / HRM2) (Desulfobacterium autotrophicum).